A 326-amino-acid chain; its full sequence is tRNA dimethylallyltransferase 2 (326 aa).

14–21 is an ATP binding site; that stretch reads GPTASGKT. Residue 16 to 21 participates in substrate binding; the sequence is TASGKT. The segment at 39–42 is interaction with substrate tRNA; sequence DSMQ.

The protein belongs to the IPP transferase family. As to quaternary structure, monomer. The cofactor is Mg(2+).

The enzyme catalyses adenosine(37) in tRNA + dimethylallyl diphosphate = N(6)-dimethylallyladenosine(37) in tRNA + diphosphate. Functionally, catalyzes the transfer of a dimethylallyl group onto the adenine at position 37 in tRNAs that read codons beginning with uridine, leading to the formation of N6-(dimethylallyl)adenosine (i(6)A). This Geotalea daltonii (strain DSM 22248 / JCM 15807 / FRC-32) (Geobacter daltonii) protein is tRNA dimethylallyltransferase 2.